We begin with the raw amino-acid sequence, 417 residues long: Methyltransferase/ribosomally synthesized cyclic peptide omphalotin A precursor ophMA (417 aa).

The methyltransferase domain stretch occupies residues 1–251 (METSTQTKAG…GVSTFYIPPK (251 aa)). Active-site residues include Arg72, Tyr76, and Tyr98. Residues Tyr98, His100, Val103, Ala130, Gln172, Ala213, Ser244, and Thr245 each contribute to the S-adenosyl-L-methionine site. The segment at 252 to 378 (ARKASNLDII…WAIRCAMKNM (127 aa)) is clasp domain. The interval 379 to 399 (PSSLLDAARESGEEASQNGFP) is precursor leader. N-methylvaline is present on residues Val401, Val403, and Val404. At Gly405 the chain carries N-methylglycine. Val406 carries the N-methylvaline modification. Ile407 carries the post-translational modification N-methylisoleucine. Gly408 carries the N-methylglycine modification. Position 410 is an N-methylisoleucine (Ile410). The residue at position 411 (Gly411) is an N-methylglycine. N-methylvaline is present on Val413.

The protein in the N-terminal section; belongs to the precorrin methyltransferase family. In terms of assembly, homodimer. Post-translationally, ophMA automethylates at Val-401, Val-403, Val-404, Gly-405, Val-406, Ile-407, Gly-408, Ile-410, Gly-411 and Val-413 before being processed by the prolyloligopeptidase ophP which likely forms a peptidyl ester upon removal of the follower propeptide, which then undergoes macrocyclization with the N-terminus of the modified core peptide. Peptide backbone alpha-N-methylations change the physicochemical properties of amide bonds to provide structural constraints and other favorable characteristics including biological membrane permeability to peptides.

It functions in the pathway mycotoxin biosynthesis. Its function is as follows. Fusion protein of the methyltransferase ophM and the omphalotin core peptide; part of the gene cluster that mediates the biosynthesis of omphalotin A, a highly methylated cyclic dodecapeptide with nematodicidal activity. Omphalotin A derives from the C-terminus of the ophMA protein, and it is the ophMA protein that methylates its own C-terminus using S-adenosyl methionine (SAM). The C-terminus is subsequently cleaved off and macrocyclized by the prolyloligopeptidase ophP to give the final product. The chain is Methyltransferase/ribosomally synthesized cyclic peptide omphalotin A precursor ophMA from Omphalotus olearius (Jack o'lantern).